The chain runs to 709 residues: Polyribonucleotide nucleotidyltransferase (709 aa).

Positions 487 and 493 each coordinate Mg(2+). Residues 554–613 form the KH domain; the sequence is PRIHTMKISSDKIKDVIGKGGAVIRALCEETGTTIEIEDDGTIKIAATEGAAAKEAIRRI. The 69-residue stretch at 623–691 folds into the S1 motif domain; that stretch reads GKIYTGKVMR…RQGRIRLSIK (69 aa).

This sequence belongs to the polyribonucleotide nucleotidyltransferase family. Component of the RNA degradosome, which is a multiprotein complex involved in RNA processing and mRNA degradation. Mg(2+) serves as cofactor.

Its subcellular location is the cytoplasm. It catalyses the reaction RNA(n+1) + phosphate = RNA(n) + a ribonucleoside 5'-diphosphate. Its function is as follows. Involved in mRNA degradation. Catalyzes the phosphorolysis of single-stranded polyribonucleotides processively in the 3'- to 5'-direction. In Aliivibrio fischeri (strain MJ11) (Vibrio fischeri), this protein is Polyribonucleotide nucleotidyltransferase.